Reading from the N-terminus, the 79-residue chain is Large ribosomal subunit protein uL24 (79 aa).

This sequence belongs to the universal ribosomal protein uL24 family. In terms of assembly, part of the 50S ribosomal subunit.

In terms of biological role, one of two assembly initiator proteins, it binds directly to the 5'-end of the 23S rRNA, where it nucleates assembly of the 50S subunit. Functionally, one of the proteins that surrounds the polypeptide exit tunnel on the outside of the subunit. This is Large ribosomal subunit protein uL24 from Aliarcobacter butzleri (strain RM4018) (Arcobacter butzleri).